Consider the following 529-residue polypeptide: MNNARPIRRALLSVSDKTGILEFAQALHAQGVELLSTGGTARLLADNGVPVIEVSDYTGHPEIMDGRVKTLHPKVHGGILARRGIDELVMEQNNINPIDLVAVNLYPFAETVAKEGCTLADAVENIDIGGPTMVRSTAKNHKDTTIIVNASDYGRVIAEMQANEGSTTLETRFDLAIAAFEHTAAYDGMIANYFGTKVPAHSKDECHEDSKFPRTYNTQLVKKQDLRYGENSHQTAAFYVDTNLDEASVATAVQLQGKALSYNNIADTDSALECVKEFDEPACVIVKHANPCGVAIGDNLLEAYNRAFQTDPTSAFGGIIAFNGELDAATAAAIVERQFVEVIIAPSVSQAARDVVAAKANVRLLECGQWASKTTSLDYKRVNGGLLLQDRDQGMVGIDDVKVVSKRQPTASEMKDLMFCWKVAKFVKSNAIVYAKNSMTIGVGAGQMSRVYSAKVAGIKAADEGLVVQDSVMASDAFFPFRDGIDAAAEAGISCIIQPGGSIRDEEIINAADEHGMAMVFTGMRHFRH.

Positions 1–148 (MNNARPIRRA…KNHKDTTIIV (148 aa)) constitute an MGS-like domain.

The protein belongs to the PurH family.

It carries out the reaction (6R)-10-formyltetrahydrofolate + 5-amino-1-(5-phospho-beta-D-ribosyl)imidazole-4-carboxamide = 5-formamido-1-(5-phospho-D-ribosyl)imidazole-4-carboxamide + (6S)-5,6,7,8-tetrahydrofolate. It catalyses the reaction IMP + H2O = 5-formamido-1-(5-phospho-D-ribosyl)imidazole-4-carboxamide. It functions in the pathway purine metabolism; IMP biosynthesis via de novo pathway; 5-formamido-1-(5-phospho-D-ribosyl)imidazole-4-carboxamide from 5-amino-1-(5-phospho-D-ribosyl)imidazole-4-carboxamide (10-formyl THF route): step 1/1. It participates in purine metabolism; IMP biosynthesis via de novo pathway; IMP from 5-formamido-1-(5-phospho-D-ribosyl)imidazole-4-carboxamide: step 1/1. This chain is Bifunctional purine biosynthesis protein PurH, found in Shewanella piezotolerans (strain WP3 / JCM 13877).